Here is a 697-residue protein sequence, read N- to C-terminus: Elongation factor G (697 aa).

The tr-type G domain maps to 10–285; sequence EKTRNIGIVA…GVNDYLPSPL (276 aa). GTP contacts are provided by residues 19 to 26, 83 to 87, and 137 to 140; these read AHIDAGKT, DTPGH, and NKMD.

This sequence belongs to the TRAFAC class translation factor GTPase superfamily. Classic translation factor GTPase family. EF-G/EF-2 subfamily.

Its subcellular location is the cytoplasm. In terms of biological role, catalyzes the GTP-dependent ribosomal translocation step during translation elongation. During this step, the ribosome changes from the pre-translocational (PRE) to the post-translocational (POST) state as the newly formed A-site-bound peptidyl-tRNA and P-site-bound deacylated tRNA move to the P and E sites, respectively. Catalyzes the coordinated movement of the two tRNA molecules, the mRNA and conformational changes in the ribosome. The chain is Elongation factor G from Ligilactobacillus salivarius (strain UCC118) (Lactobacillus salivarius).